The primary structure comprises 218 residues: MQADFWHARWANNQIGFHLDEVNPYLMRHLSRLRLQAGEQVLVPLCGKTLDLAWLAAQGLDVLGVELSEKAVSDFFAENGLQPAIDQMDGFRRYRAAGITLLQGDFFALQSGHLAGCRAFYDRAALIALPPDMRERYAGHLQAILPARSLGLLVTIDYPQGEMAGPPFAVPDAEVREHYAAGWRIEELERGDVLGVNWKFLERGVSWLNEAVYLLQRG.

Residues tryptophan 10, leucine 45, glutamate 66, and arginine 123 each coordinate S-adenosyl-L-methionine.

It belongs to the class I-like SAM-binding methyltransferase superfamily. TPMT family.

Its subcellular location is the cytoplasm. It carries out the reaction S-adenosyl-L-methionine + a thiopurine = S-adenosyl-L-homocysteine + a thiopurine S-methylether.. This chain is Thiopurine S-methyltransferase, found in Pseudomonas paraeruginosa (strain DSM 24068 / PA7) (Pseudomonas aeruginosa (strain PA7)).